A 161-amino-acid polypeptide reads, in one-letter code: MNLLRPKLKYFILAILIIAADLYTKYLANTYLEFAQSLKITSFFNLTLLYNHGAAFSLLSNDQTSWQMIMFSTISLIAAIVLIYLIIKQPITEKINLFSFALILGGALGNFYDRAFQGYVIDFLDFHIGNYHWPSFNIADSAITCGVVILIAASLFTKKKS.

Helical transmembrane passes span 8–28 (LKYF…KYLA), 40–60 (ITSF…SLLS), 67–87 (QMIM…YLII), and 91–111 (ITEK…LGNF). Catalysis depends on residues Asp122 and Asp140. Residues 136 to 156 (FNIADSAITCGVVILIAASLF) form a helical membrane-spanning segment.

The protein belongs to the peptidase A8 family.

The protein resides in the cell inner membrane. It carries out the reaction Release of signal peptides from bacterial membrane prolipoproteins. Hydrolyzes -Xaa-Yaa-Zaa-|-(S,diacylglyceryl)Cys-, in which Xaa is hydrophobic (preferably Leu), and Yaa (Ala or Ser) and Zaa (Gly or Ala) have small, neutral side chains.. It functions in the pathway protein modification; lipoprotein biosynthesis (signal peptide cleavage). This protein specifically catalyzes the removal of signal peptides from prolipoproteins. This is Lipoprotein signal peptidase from Francisella tularensis subsp. tularensis (strain FSC 198).